The sequence spans 147 residues: CRISP-1 (147 aa).

Belongs to the CRISP family. As to expression, expressed by the venom gland.

The protein localises to the secreted. This chain is CRISP-1, found in Phoneutria keyserlingi (Brazilian wandering spider).